A 467-amino-acid polypeptide reads, in one-letter code: tRNA-2-methylthio-N(6)-dimethylallyladenosine synthase (467 aa).

A disordered region spans residues 1-20; the sequence is MSDDTTQIEPAMAQETSPRA. One can recognise an MTTase N-terminal domain in the interval 23–143; that stretch reads RKVFVKTYGC…LPNALARVRG (121 aa). 6 residues coordinate [4Fe-4S] cluster: C32, C68, C106, C184, C188, and C191. Positions 170–402 constitute a Radical SAM core domain; the sequence is RKRGVSAFLT…QALLSAQQYA (233 aa). The 63-residue stretch at 405-467 folds into the TRAM domain; that stretch reads DSMIGRKMDV…TNSLIAQKLA (63 aa).

The protein belongs to the methylthiotransferase family. MiaB subfamily. Monomer. Requires [4Fe-4S] cluster as cofactor.

The protein localises to the cytoplasm. The enzyme catalyses N(6)-dimethylallyladenosine(37) in tRNA + (sulfur carrier)-SH + AH2 + 2 S-adenosyl-L-methionine = 2-methylsulfanyl-N(6)-dimethylallyladenosine(37) in tRNA + (sulfur carrier)-H + 5'-deoxyadenosine + L-methionine + A + S-adenosyl-L-homocysteine + 2 H(+). Catalyzes the methylthiolation of N6-(dimethylallyl)adenosine (i(6)A), leading to the formation of 2-methylthio-N6-(dimethylallyl)adenosine (ms(2)i(6)A) at position 37 in tRNAs that read codons beginning with uridine. This is tRNA-2-methylthio-N(6)-dimethylallyladenosine synthase from Brucella abortus (strain S19).